The sequence spans 928 residues: Isoleucine--tRNA ligase (928 aa).

Positions 57–67 (PFANGNIHMGH) match the 'HIGH' region motif. Residue glutamate 554 participates in L-isoleucyl-5'-AMP binding. The 'KMSKS' region motif lies at 595–599 (KMSKS). Lysine 598 is an ATP binding site. Zn(2+)-binding residues include cysteine 887, cysteine 890, cysteine 907, and cysteine 910.

This sequence belongs to the class-I aminoacyl-tRNA synthetase family. IleS type 1 subfamily. As to quaternary structure, monomer. Zn(2+) is required as a cofactor.

It localises to the cytoplasm. The enzyme catalyses tRNA(Ile) + L-isoleucine + ATP = L-isoleucyl-tRNA(Ile) + AMP + diphosphate. Catalyzes the attachment of isoleucine to tRNA(Ile). As IleRS can inadvertently accommodate and process structurally similar amino acids such as valine, to avoid such errors it has two additional distinct tRNA(Ile)-dependent editing activities. One activity is designated as 'pretransfer' editing and involves the hydrolysis of activated Val-AMP. The other activity is designated 'posttransfer' editing and involves deacylation of mischarged Val-tRNA(Ile). The protein is Isoleucine--tRNA ligase of Lactobacillus johnsonii (strain CNCM I-12250 / La1 / NCC 533).